A 323-amino-acid polypeptide reads, in one-letter code: Fructose-1,6-bisphosphatase class 1 (323 aa).

Residues Glu88, Asp107, Leu109, and Asp110 each coordinate Mg(2+). Substrate-binding positions include 110–113 (DGSS) and Asn200. Glu272 is a binding site for Mg(2+).

It belongs to the FBPase class 1 family. In terms of assembly, homotetramer. Requires Mg(2+) as cofactor.

Its subcellular location is the cytoplasm. The enzyme catalyses beta-D-fructose 1,6-bisphosphate + H2O = beta-D-fructose 6-phosphate + phosphate. It functions in the pathway carbohydrate biosynthesis; gluconeogenesis. This is Fructose-1,6-bisphosphatase class 1 from Acinetobacter baumannii (strain AYE).